The sequence spans 92 residues: Protein EMB-1 (92 aa).

Basic and acidic residues-rich tracts occupy residues 1 to 16 (MASQ…RARQ), 37 to 61 (AEGR…EMGR), and 72 to 92 (GGER…RTKK). The interval 1 to 92 (MASQQEKKEL…IDESKFRTKK (92 aa)) is disordered.

This sequence belongs to the small hydrophilic plant seed protein family. Expressed in embryogenic cells, somatic embryos and seeds at the later stages of development. In the embryos, expressed in the procambium, the root and shoot meristem and the protoderm of the cotyledons. Not detected in the endosperm or the aleurone layer, in young leaves or roots.

The protein localises to the nucleus. The polypeptide is Protein EMB-1 (Daucus carota (Wild carrot)).